We begin with the raw amino-acid sequence, 1363 residues long: Zinc finger protein 541 (1363 aa).

Disordered stretches follow at residues 1–23 and 106–137; these read MEPYSLGEEGALPSEGHLPSFSE and LGALKVPKEADEGGRATGSTRKGKRQHSSPQN. 3 consecutive C2H2-type zinc fingers follow at residues 140–162, 168–190, and 196–221; these read LDCSLCGKVFSSASSLSKHYLTH, HVCKVCSKAFKRQDHLTGHMLTH, and FVCIEQGCSKSYCDYRSLRRHYEVQH. 4 disordered regions span residues 232-269, 286-387, 440-532, and 574-741; these read EEEAYGDPTHNHDVANQPPPSGLRSLGPPEARSPGSVL, KIPS…GWPE, VASR…PGGL, and QVAT…GYRL. Residues 311-321 are compositionally biased toward polar residues; it reads SLGSSSCTPAS. Residues 335–345 show a composition bias toward basic and acidic residues; the sequence is EETHPPRKEAA. Positions 453-465 are enriched in low complexity; that stretch reads PSSTPTSVEPSPS. Residues 597–608 are compositionally biased toward pro residues; sequence GPWPPQTLPPAP. The segment covering 659 to 670 has biased composition (low complexity); it reads PPSLTGPGLLPS. A C2H2-type 4 zinc finger spans residues 838-860; sequence FVCKNCSQMFYTEKGLSSHMCFH. The disordered stretch occupies residues 935–978; sequence QGQEKDGEERDSKESCQYRKRKKRPQPKALFAPPAPSALGEPGP. The span at 937-951 shows a compositional bias: basic and acidic residues; the sequence is QEKDGEERDSKESCQ. An ELM2 domain is found at 1063–1155; sequence PHINVGSRFQ…VALETLLLRG (93 aa). The SANT domain maps to 1170–1221; the sequence is TGSDIWTPMEKRLFKKAFCAHKKDFYLIHKMIQTKSVAQCVEYYYIWKKMVK. The interval 1243–1298 is disordered; it reads RTEDKVTCSPRERPTHRPTPELKIKTKSYRRESILHSSPSAAPKRTPEPPGSVESQ. A compositionally biased stretch (basic and acidic residues) spans 1244-1276; that stretch reads TEDKVTCSPRERPTHRPTPELKIKTKSYRRESI. The C2H2-type 5 zinc-finger motif lies at 1301–1323; sequence FPCRECERVFDKIKSRNAHMKRH. The tract at residues 1343-1363 is disordered; the sequence is LKEEEEEEEEELGADMGPLQW. The segment covering 1345 to 1355 has biased composition (acidic residues); sequence EEEEEEEEELG.

In terms of assembly, interacts with DNTTIP1. Identified in a complex with KCTD19, HDAC1 and HSPA2. Identified in a complex with HDAC1, HDAC2, DNTTIP1 and KCTD19. Identified in a complex with KCTD19 and HDAC1. In terms of tissue distribution, germ-cell-specific. Specifically present in testicular spermatogenic cells, but not in testicular and mature sperm. During spermatogenesis, it is present in spermatocytes and round spermatids only (at protein level).

The protein resides in the nucleus. In terms of biological role, transcription regulator which is essential for male fertility and for the completion of meiotic prophase in spermatocytes. Regulates progression of the pachytene stage of meiotic prophase by activating the expression of genes involved in meiosis and post-meiosis during spermatogenesis. Maintains the repression of pre-pachytene transcriptional programs, including meiotic double-strand breaks (DSB) formation genes in pachytene spermatocytes and suppresses aberrant DSB formation after mid-pachytene, thus ensuring meiosis progression. This chain is Zinc finger protein 541 (Znf541), found in Mus musculus (Mouse).